A 134-amino-acid chain; its full sequence is Ribonuclease VapC1 (134 aa).

In terms of domain architecture, PINc spans 3–132; sequence YMLDTNIIIY…RITDLQWQDW (130 aa). Residues Asp-6 and Asp-99 each coordinate Mg(2+).

Belongs to the PINc/VapC protein family. As to quaternary structure, forms a complex with VapB1. The cofactor is Mg(2+).

In terms of biological role, toxic component of a type II toxin-antitoxin (TA) system. Upon expression in E.coli inhibits growth in liquid culture. Its toxic effect is neutralized by coexpression with antitoxin VapB1. Degrades RNA but not ss- or ds-DNA in vitro, degradation is inhibited by VapB1 antitoxin. The polypeptide is Ribonuclease VapC1 (Haemophilus influenzae (strain R2866)).